Reading from the N-terminus, the 353-residue chain is Photosystem II protein D1 (353 aa).

At Thr-2 the chain carries N-acetylthreonine. Thr-2 is subject to Phosphothreonine. The next 3 membrane-spanning stretches (helical) occupy residues 29 to 46, 118 to 133, and 142 to 156; these read YIGWFGVLMIPTLLTATS, HFLLGVACYMGREWEL, and WIAVAYSAPVAAATA. Chlorophyll a is bound at residue His-118. Residue Tyr-126 participates in pheophytin a binding. 2 residues coordinate [CaMn4O5] cluster: Asp-170 and Glu-189. The helical transmembrane segment at 197-218 threads the bilayer; it reads FHMLGVAGVFGGSLFSAMHGSL. Residue His-198 participates in chlorophyll a binding. A quinone is bound by residues His-215 and 264–265; that span reads SF. A Fe cation-binding site is contributed by His-215. Residue His-272 coordinates Fe cation. A helical transmembrane segment spans residues 274-288; that stretch reads FLAAWPVVGIWFTAL. His-332, Glu-333, Asp-342, and Ala-344 together coordinate [CaMn4O5] cluster. Residues 345–353 constitute a propeptide that is removed on maturation; the sequence is AVEAPSTNG.

Belongs to the reaction center PufL/M/PsbA/D family. As to quaternary structure, PSII is composed of 1 copy each of membrane proteins PsbA, PsbB, PsbC, PsbD, PsbE, PsbF, PsbH, PsbI, PsbJ, PsbK, PsbL, PsbM, PsbT, PsbX, PsbY, PsbZ, Psb30/Ycf12, at least 3 peripheral proteins of the oxygen-evolving complex and a large number of cofactors. It forms dimeric complexes. Requires The D1/D2 heterodimer binds P680, chlorophylls that are the primary electron donor of PSII, and subsequent electron acceptors. It shares a non-heme iron and each subunit binds pheophytin, quinone, additional chlorophylls, carotenoids and lipids. D1 provides most of the ligands for the Mn4-Ca-O5 cluster of the oxygen-evolving complex (OEC). There is also a Cl(-1) ion associated with D1 and D2, which is required for oxygen evolution. The PSII complex binds additional chlorophylls, carotenoids and specific lipids. as cofactor. Post-translationally, tyr-161 forms a radical intermediate that is referred to as redox-active TyrZ, YZ or Y-Z. C-terminally processed by CTPA; processing is essential to allow assembly of the oxygen-evolving complex and thus photosynthetic growth.

It localises to the plastid. The protein resides in the chloroplast thylakoid membrane. It carries out the reaction 2 a plastoquinone + 4 hnu + 2 H2O = 2 a plastoquinol + O2. Photosystem II (PSII) is a light-driven water:plastoquinone oxidoreductase that uses light energy to abstract electrons from H(2)O, generating O(2) and a proton gradient subsequently used for ATP formation. It consists of a core antenna complex that captures photons, and an electron transfer chain that converts photonic excitation into a charge separation. The D1/D2 (PsbA/PsbD) reaction center heterodimer binds P680, the primary electron donor of PSII as well as several subsequent electron acceptors. This Nymphaea alba (White water-lily) protein is Photosystem II protein D1.